We begin with the raw amino-acid sequence, 537 residues long: MAKEAQSLHELDNMKEKEVDQEKKAPTSVGDQEEHDDPKKQASHSQNVSENGLVDEAAQEAPEDESQYPGPLAMAVIMVAISMGMFLVSLLPLGRFYKFYSPKWVYMSLVFIFVIGSAVGAGAMNSNTVIVGRAIQGIGLGGVLSGSTILIAENAPLHRQPMFLGILMATMSISAIVGPLIGGALTTHTSWRWCFILNIPIGGAIIAVLFFFVKAREGKEQRAQGWVEKIRQLDPLGSALLLPAVVCLILALQWAGSQYSWDNWRIILLFVFGGLLSIGFVVSQMLRPDTATVPPHVVCQRTVFGSFLFSAMTGGAMLVVTYWISDWFQAVQNVSAAQAGIRTIALVLSQAVGAIMGGGSSRLIGYPPPIMMISATFIAVGAGLLTTLNVDTKSANWIGYQILMGLGLGFGTQQASLAVQTVLKKDDIPTAISLIFFGMQLGGSIFVCIGQNVFNQVFVKLLGQAAIPGLDTDLVLRTGATEIRQLVHNDADLSKLVTTYNTSVTSTFYVALAAGITSMLSAFLVQWKSVKNVEPVH.

The span at 1-25 shows a compositional bias: basic and acidic residues; that stretch reads MAKEAQSLHELDNMKEKEVDQEKKA. The interval 1–50 is disordered; that stretch reads MAKEAQSLHELDNMKEKEVDQEKKAPTSVGDQEEHDDPKKQASHSQNVSE. The N-linked (GlcNAc...) asparagine glycan is linked to N47. 8 helical membrane passes run 71 to 91, 104 to 124, 137 to 157, 162 to 182, 193 to 213, 236 to 256, 266 to 286, and 304 to 324; these read PLAM…VSLL, WVYM…AGAM, GIGL…NAPL, MFLG…PLIG, WCFI…FFFV, LGSA…QWAG, IILL…SQML, and FGSF…TYWI. N-linked (GlcNAc...) asparagine glycosylation is present at N333. Helical transmembrane passes span 339–359, 363–383, 397–417, and 430–450; these read AGIR…MGGG, LIGY…VGAG, WIGY…QASL, and TAIS…VCIG. N-linked (GlcNAc...) asparagine glycosylation is present at N501. Residues 507 to 527 traverse the membrane as a helical segment; it reads TFYVALAAGITSMLSAFLVQW.

It belongs to the major facilitator superfamily. TCR/Tet family.

Its subcellular location is the cell membrane. Functionally, efflux pump; part of the gene cluster that mediates the biosynthesis of ustilaginoidins, dimeric gamma-naphthopyrones isolated from different fungal species. The sequence is that of Efflux pump ustT from Ustilaginoidea virens (Rice false smut fungus).